The primary structure comprises 516 residues: Flavonoid-6-hydroxylase (516 aa).

Residues F3–W23 traverse the membrane as a helical segment. Residue C455 participates in heme binding.

The protein belongs to the cytochrome P450 family. Heme serves as cofactor.

The protein resides in the membrane. The enzyme catalyses genkwanin + reduced [NADPH--hemoprotein reductase] + O2 = scutellarein 7-methyl ether + oxidized [NADPH--hemoprotein reductase] + H2O. The catalysed reaction is (2S)-sakuranetin + reduced [NADPH--hemoprotein reductase] + O2 = (2S)-7-methylcarthamidin + oxidized [NADPH--hemoprotein reductase] + H2O + H(+). It carries out the reaction apigenin 4',7-dimethyl ether + reduced [NADPH--hemoprotein reductase] + O2 = ladanein + oxidized [NADPH--hemoprotein reductase] + H2O + H(+). It catalyses the reaction (2S)-naringenin 4',7-dimethyl ether + reduced [NADPH--hemoprotein reductase] + O2 = (2S)-carthamidin-4',7-dimethyl ether + oxidized [NADPH--hemoprotein reductase] + H2O + H(+). The protein operates within flavonoid metabolism. 6-OH hydroxylase involved in the biosynthesis of polymethoxylated flavonoids natural products such as pebrellin, aroma compounds which contribute to the flavor of peppermint, and exhibit pharmacological activities such as anti-allergic, anti-oxidant, antibacterial, anti-proliferative, and anti-inflammatory effects. Catalyzes the 6-hydroxylation of 7-O-methylated precursors such as the conversion of genkwanin (GENK) to scutellarein-7-methyl ether (SCU7Me). Can also use apigenin-7,4'-dimethyl ether (AdM), naringenin-7-methyl ether (SAK) and naringenin-7,4'-dimethyl ether (NdM) as substrates. This is Flavonoid-6-hydroxylase from Mentha piperita (Peppermint).